Reading from the N-terminus, the 359-residue chain is 3-dehydroquinate synthase (359 aa).

NAD(+) contacts are provided by residues 71–76, 105–109, 129–130, Lys-142, Lys-151, and 169–172; these read DGEQYK, GVIGD, TT, and CLKT. Residues Glu-184, His-247, and His-264 each coordinate Zn(2+).

This sequence belongs to the sugar phosphate cyclases superfamily. Dehydroquinate synthase family. Co(2+) serves as cofactor. It depends on Zn(2+) as a cofactor. The cofactor is NAD(+).

The protein localises to the cytoplasm. The enzyme catalyses 7-phospho-2-dehydro-3-deoxy-D-arabino-heptonate = 3-dehydroquinate + phosphate. It participates in metabolic intermediate biosynthesis; chorismate biosynthesis; chorismate from D-erythrose 4-phosphate and phosphoenolpyruvate: step 2/7. Its function is as follows. Catalyzes the conversion of 3-deoxy-D-arabino-heptulosonate 7-phosphate (DAHP) to dehydroquinate (DHQ). The sequence is that of 3-dehydroquinate synthase from Shewanella amazonensis (strain ATCC BAA-1098 / SB2B).